A 668-amino-acid chain; its full sequence is Probable tRNA (uracil-O(2)-)-methyltransferase (668 aa).

The disordered stretch occupies residues 441 to 460 (QHTDSLHISTKSSLDKDDPP). Residues 620 to 649 (LKTRLCWFYVHHPNGCPRVAKSCPYAHGAE) form a C3H1-type zinc finger.

It belongs to the TRM44 family.

Its subcellular location is the cytoplasm. The enzyme catalyses uridine(44) in tRNA(Ser) + S-adenosyl-L-methionine = 2'-O-methyluridine(44) in tRNA(Ser) + S-adenosyl-L-homocysteine + H(+). Probable adenosyl-L-methionine (AdoMet)-dependent tRNA (uracil-O(2)-)-methyltransferase. The chain is Probable tRNA (uracil-O(2)-)-methyltransferase (trmt44) from Xenopus laevis (African clawed frog).